A 110-amino-acid chain; its full sequence is ATP synthase subunit c (110 aa).

A run of 3 helical transmembrane segments spans residues 4-24 (FFVILMVALVVVLTASAVFAA), 37-57 (ATAGALIGLGAAAGGGGAGMG), and 81-101 (FIVGLALIESLVIYVLVFVLI).

This sequence belongs to the ATPase C chain family. In terms of assembly, F-type ATPases have 2 components, F(1) - the catalytic core - and F(0) - the membrane proton channel. F(1) has five subunits: alpha(3), beta(3), gamma(1), delta(1), epsilon(1). F(0) has three main subunits: a(1), b(2) and c(10-14). The alpha and beta chains form an alternating ring which encloses part of the gamma chain. F(1) is attached to F(0) by a central stalk formed by the gamma and epsilon chains, while a peripheral stalk is formed by the delta and b chains.

It is found in the cell inner membrane. In terms of biological role, f(1)F(0) ATP synthase produces ATP from ADP in the presence of a proton or sodium gradient. F-type ATPases consist of two structural domains, F(1) containing the extramembraneous catalytic core and F(0) containing the membrane proton channel, linked together by a central stalk and a peripheral stalk. During catalysis, ATP synthesis in the catalytic domain of F(1) is coupled via a rotary mechanism of the central stalk subunits to proton translocation. Key component of the F(0) channel; it plays a direct role in translocation across the membrane. A homomeric c-ring of between 10-14 subunits forms the central stalk rotor element with the F(1) delta and epsilon subunits. This Thermodesulfovibrio yellowstonii (strain ATCC 51303 / DSM 11347 / YP87) protein is ATP synthase subunit c.